The following is a 68-amino-acid chain: MLDRNSKSVLVAFYRSGNIFRYNQCSDSMETSTISSPSRRIRNNFLGLLGTRGARLSRLSWGNDTSKS.

This is an uncharacterized protein from Feline immunodeficiency virus (strain San Diego) (FIV).